The following is a 561-amino-acid chain: Putative transport protein YbjL (561 aa).

The next 5 helical transmembrane spans lie at 8–28 (LLNGNYILLLFVVLTLGLCLG), 32–52 (LGSIQLGNSIGVLVVSLLLGQ), 66–86 (FMLFIFCVGVEAGPNFFSIFF), 94–114 (MLALVMVGSALVIALGLGKLF), and 158–178 (NLSLGYALTYLIGLVSLIVGA). 2 RCK C-terminal domains span residues 200 to 288 (RGLD…SFRN) and 292 to 373 (VFDR…RIGF). 5 helical membrane passes run 383 to 403 (LLAFCAFFVIGLMIGMITFQF), 406 to 426 (FSFGMGNAAGLLFAGIMLGFM), 451 to 471 (VFMAGVGLSAGSGINNGLGAI), 475 to 495 (MLIAGLIVSLVPVVICFLFGA), and 540 to 560 (AIANVLLTLAGTIIVMVWPGL).

This sequence belongs to the AAE transporter (TC 2.A.81) family. YbjL subfamily.

The protein resides in the cell membrane. The sequence is that of Putative transport protein YbjL from Shigella sonnei (strain Ss046).